We begin with the raw amino-acid sequence, 671 residues long: DNA ligase (671 aa).

Residues 32-36 (DAEYD), 81-82 (SL), and Glu-113 contribute to the NAD(+) site. Lys-115 acts as the N6-AMP-lysine intermediate in catalysis. Arg-136, Glu-173, Lys-290, and Lys-314 together coordinate NAD(+). Zn(2+) contacts are provided by Cys-408, Cys-411, Cys-426, and Cys-432. Residues 593 to 671 (EIDSPFAGKT…EAEMMRLLGE (79 aa)) form the BRCT domain.

It belongs to the NAD-dependent DNA ligase family. LigA subfamily. Requires Mg(2+) as cofactor. Mn(2+) serves as cofactor.

The catalysed reaction is NAD(+) + (deoxyribonucleotide)n-3'-hydroxyl + 5'-phospho-(deoxyribonucleotide)m = (deoxyribonucleotide)n+m + AMP + beta-nicotinamide D-nucleotide.. In terms of biological role, DNA ligase that catalyzes the formation of phosphodiester linkages between 5'-phosphoryl and 3'-hydroxyl groups in double-stranded DNA using NAD as a coenzyme and as the energy source for the reaction. It is essential for DNA replication and repair of damaged DNA. This is DNA ligase from Klebsiella pneumoniae subsp. pneumoniae (strain ATCC 700721 / MGH 78578).